A 104-amino-acid chain; its full sequence is Large ribosomal subunit protein eL42 (104 aa).

A disordered region spans residues 22 to 56 (KVSQAKKSKDNPRAQGNRRYARKQRGYGGQTKPIL).

This sequence belongs to the eukaryotic ribosomal protein eL42 family.

This Encephalitozoon cuniculi (strain GB-M1) (Microsporidian parasite) protein is Large ribosomal subunit protein eL42 (RPL44).